Consider the following 685-residue polypeptide: MELLRTITYQPAASTKMCEQALGKGCGADSKKKRPPQPPEESQPPQSQAQVPPAAAHHHHHHSHSGPEISRIIVDPTTGKRYCRGKVLGKGGFAKCYEMTDLTNNKVYAAKIIPHSRVAKPHQREKIDKEIELHRILHHKHVVQFYHYFEDKENIYILLEYCSRRSMAHILKARKVLTEPEVRYYLRQIVSGLKYLHEQEILHRDLKLGNFFINEAMELKVGDFGLAARLEPLEHRRRTICGTPNYLSPEVLNKQGHGCESDIWALGCVMYTMLLGRPPFETTNLKETYRCIREARYTMPSSLLAPAKHLIASMLSKNPEDRPSLDDIIRHDFFLQGFTPDRLSSSCCHTVPDFHLSSPAKNFFKKAAAALFGGKKDKARYIDTHNRVSKEDEDIYKLRHDLKKTSITQQPSKHRTDEELQPPTTTVARSGTPAVENKQQIGDAIRMIVRGTLGSCSSSSECLEDSTMGSVADTVARVLRGCLENMPEADCIPKEQLSTSFQWVTKWVDYSNKYGFGYQLSDHTVGVLFNNGAHMSLLPDKKTVHYYAELGQCSVFPATDAPEQFISQVTVLKYFSHYMEENLMDGGDLPSVTDIRRPRLYLLQWLKSDKALMMLFNDGTFQVNFYHDHTKIIICSQNEEYLLTYINEDRISTTFRLTTLLMSGCSLELKNRMEYALNMLLQRCN.

Residues 24-71 (KGCGADSKKKRPPQPPEESQPPQSQAQVPPAAAHHHHHHSHSGPEISR) form a disordered region. Residues 43-55 (QPPQSQAQVPPAA) are compositionally biased toward low complexity. Residues 82-334 (YCRGKVLGKG…LDDIIRHDFF (253 aa)) enclose the Protein kinase domain. ATP is bound by residues 88–96 (LGKGGFAKC) and Lys111. Asp205 (proton acceptor) is an active-site residue. Thr239 carries the post-translational modification Phosphothreonine. The interval 406–433 (SITQQPSKHRTDEELQPPTTTVARSGTP) is disordered. 2 consecutive POLO box domains span residues 503–581 (WVTK…YMEE) and 601–685 (YLLQ…QRCN).

Belongs to the protein kinase superfamily. Ser/Thr protein kinase family. CDC5/Polo subfamily. In terms of assembly, interacts with NSF; causing NSF dissociation from GRIA2. Interacts with CIB1. Post-translationally, catalytic activity is enhanced by phosphorylation of Thr-239.

Its subcellular location is the cytoplasm. It localises to the cytoskeleton. It is found in the microtubule organizing center. The protein localises to the centrosome. The protein resides in the centriole. Its subcellular location is the cell projection. It localises to the dendrite. It catalyses the reaction L-seryl-[protein] + ATP = O-phospho-L-seryl-[protein] + ADP + H(+). The enzyme catalyses L-threonyl-[protein] + ATP = O-phospho-L-threonyl-[protein] + ADP + H(+). With respect to regulation, activated by phosphorylation of Thr-239. Once activated, activity is stimulated by binding target proteins. Functionally, tumor suppressor serine/threonine-protein kinase involved in synaptic plasticity, centriole duplication and G1/S phase transition. Polo-like kinases act by binding and phosphorylating proteins that are already phosphorylated on a specific motif recognized by the POLO box domains. Phosphorylates CPAP, NPM1, RAPGEF2, RASGRF1, SNCA, SIPA1L1 and SYNGAP1. Plays a key role in synaptic plasticity and memory by regulating the Ras and Rap protein signaling: required for overactivity-dependent spine remodeling by phosphorylating the Ras activator RASGRF1 and the Rap inhibitor SIPA1L1 leading to their degradation by the proteasome. Conversely, phosphorylates the Rap activator RAPGEF2 and the Ras inhibitor SYNGAP1, promoting their activity. Also regulates synaptic plasticity independently of kinase activity, via its interaction with NSF that disrupts the interaction between NSF and the GRIA2 subunit of AMPARs, leading to a rapid rundown of AMPAR-mediated current that occludes long term depression. Required for procentriole formation and centriole duplication by phosphorylating CPAP and NPM1, respectively. Its induction by p53/TP53 suggests that it may participate in the mitotic checkpoint following stress. The chain is Serine/threonine-protein kinase PLK2 (PLK2) from Pongo abelii (Sumatran orangutan).